Consider the following 380-residue polypeptide: 3-isopropylmalate dehydratase large subunit 2 (380 aa).

[4Fe-4S] cluster-binding residues include Cys262, Cys320, and Cys323.

This sequence belongs to the aconitase/IPM isomerase family. LeuC type 2 subfamily. As to quaternary structure, heterodimer of LeuC and LeuD. It depends on [4Fe-4S] cluster as a cofactor.

It carries out the reaction (2R,3S)-3-isopropylmalate = (2S)-2-isopropylmalate. It functions in the pathway amino-acid biosynthesis; L-leucine biosynthesis; L-leucine from 3-methyl-2-oxobutanoate: step 2/4. In terms of biological role, catalyzes the isomerization between 2-isopropylmalate and 3-isopropylmalate, via the formation of 2-isopropylmaleate. The sequence is that of 3-isopropylmalate dehydratase large subunit 2 from Pyrococcus furiosus (strain ATCC 43587 / DSM 3638 / JCM 8422 / Vc1).